A 384-amino-acid chain; its full sequence is Methylthioribose-1-phosphate isomerase (384 aa).

Aspartate 255 serves as the catalytic Proton donor.

Belongs to the eIF-2B alpha/beta/delta subunits family. MtnA subfamily.

The protein localises to the cytoplasm. The protein resides in the nucleus. It catalyses the reaction 5-(methylsulfanyl)-alpha-D-ribose 1-phosphate = 5-(methylsulfanyl)-D-ribulose 1-phosphate. Its pathway is amino-acid biosynthesis; L-methionine biosynthesis via salvage pathway; L-methionine from S-methyl-5-thio-alpha-D-ribose 1-phosphate: step 1/6. In terms of biological role, catalyzes the interconversion of methylthioribose-1-phosphate (MTR-1-P) into methylthioribulose-1-phosphate (MTRu-1-P). The polypeptide is Methylthioribose-1-phosphate isomerase (mri1) (Talaromyces stipitatus (strain ATCC 10500 / CBS 375.48 / QM 6759 / NRRL 1006) (Penicillium stipitatum)).